The primary structure comprises 436 residues: Calcium/calmodulin-regulated receptor-like kinase 2 (436 aa).

Residues 7–34 (LVVIGISVGLALGLLLALLLFFAIKWYY) traverse the membrane as a helical segment. The disordered stretch occupies residues 65 to 88 (DRANTESSQPPENGAPTQHQPWWN). Over residues 69–88 (TESSQPPENGAPTQHQPWWN) the composition is skewed to polar residues. In terms of domain architecture, Protein kinase spans 114–375 (QNFTTVLGQG…PSIGEVTQFI (262 aa)). ATP contacts are provided by residues 120-128 (LGQGSFGPV) and Lys142. Tyr187 is subject to Phosphotyrosine. Catalysis depends on Asp239, which acts as the Proton acceptor. Position 276 is a phosphothreonine (Thr276). Tyr284 carries the phosphotyrosine modification.

The protein belongs to the protein kinase superfamily. Ser/Thr protein kinase family.

The protein resides in the cell membrane. The catalysed reaction is L-seryl-[protein] + ATP = O-phospho-L-seryl-[protein] + ADP + H(+). It carries out the reaction L-threonyl-[protein] + ATP = O-phospho-L-threonyl-[protein] + ADP + H(+). The sequence is that of Calcium/calmodulin-regulated receptor-like kinase 2 from Arabidopsis thaliana (Mouse-ear cress).